Consider the following 234-residue polypeptide: Leucyl/phenylalanyl-tRNA--protein transferase (234 aa).

This sequence belongs to the L/F-transferase family.

The protein resides in the cytoplasm. It catalyses the reaction N-terminal L-lysyl-[protein] + L-leucyl-tRNA(Leu) = N-terminal L-leucyl-L-lysyl-[protein] + tRNA(Leu) + H(+). The enzyme catalyses N-terminal L-arginyl-[protein] + L-leucyl-tRNA(Leu) = N-terminal L-leucyl-L-arginyl-[protein] + tRNA(Leu) + H(+). The catalysed reaction is L-phenylalanyl-tRNA(Phe) + an N-terminal L-alpha-aminoacyl-[protein] = an N-terminal L-phenylalanyl-L-alpha-aminoacyl-[protein] + tRNA(Phe). Functions in the N-end rule pathway of protein degradation where it conjugates Leu, Phe and, less efficiently, Met from aminoacyl-tRNAs to the N-termini of proteins containing an N-terminal arginine or lysine. The chain is Leucyl/phenylalanyl-tRNA--protein transferase from Shigella flexneri serotype 5b (strain 8401).